The following is a 108-amino-acid chain: Tyrosine-protein phosphatase 5 (108 aa).

The 108-residue stretch at 1 to 108 folds into the Tyrosine-protein phosphatase domain; that stretch reads QESTVIVMLT…QGNNPSPIIV (108 aa). Residue Asp-78 participates in substrate binding.

This sequence belongs to the protein-tyrosine phosphatase family.

The catalysed reaction is O-phospho-L-tyrosyl-[protein] + H2O = L-tyrosyl-[protein] + phosphate. This is Tyrosine-protein phosphatase 5 (STY-5) from Styela plicata (Wrinkled sea squirt).